Here is a 140-residue protein sequence, read N- to C-terminus: Gastrula zinc finger protein XlCGF49.1 (140 aa).

5 consecutive C2H2-type zinc fingers follow at residues 6–28 (FTCM…YKIH), 34–56 (FTCM…YKMH), 62–84 (FSCS…QKIH), 90–112 (YACT…WKIH), and 118–140 (FSCT…QKMH).

It belongs to the krueppel C2H2-type zinc-finger protein family.

Its subcellular location is the nucleus. Functionally, may be involved in transcriptional regulation. The polypeptide is Gastrula zinc finger protein XlCGF49.1 (Xenopus laevis (African clawed frog)).